Here is a 142-residue protein sequence, read N- to C-terminus: Nucleoside diphosphate kinase (142 aa).

6 residues coordinate ATP: K11, F59, R87, T93, R104, and N114. H117 serves as the catalytic Pros-phosphohistidine intermediate.

Belongs to the NDK family. Homotetramer. It depends on Mg(2+) as a cofactor.

The protein localises to the cytoplasm. It catalyses the reaction a 2'-deoxyribonucleoside 5'-diphosphate + ATP = a 2'-deoxyribonucleoside 5'-triphosphate + ADP. The enzyme catalyses a ribonucleoside 5'-diphosphate + ATP = a ribonucleoside 5'-triphosphate + ADP. In terms of biological role, major role in the synthesis of nucleoside triphosphates other than ATP. The ATP gamma phosphate is transferred to the NDP beta phosphate via a ping-pong mechanism, using a phosphorylated active-site intermediate. The chain is Nucleoside diphosphate kinase from Yersinia pestis bv. Antiqua (strain Antiqua).